We begin with the raw amino-acid sequence, 244 residues long: MKQKRLLRRDGFTFKQFFVGHDRCAMKVGTDGVLLGAWTPVSDKKAILDIGCGSGLIALMLAQRTDENTKIDAVELDTEAALQAQDNAEQSPWQRKIDVYQQDIGDFAEQYSQCYDLIVSNPPYFEPAVACRNEAREQARYTGSMTHQQLLQYAETLITADGLFCVVLPYAIGEEFETMACHQGWFSHHRVNIRDRQGKPLHRMLLAFSRKEKTGLISELTIRQPDGAYTQEFQQLVTDFYLYY.

It belongs to the methyltransferase superfamily. tRNA (adenine-N(6)-)-methyltransferase family.

The protein resides in the cytoplasm. The catalysed reaction is adenosine(37) in tRNA1(Val) + S-adenosyl-L-methionine = N(6)-methyladenosine(37) in tRNA1(Val) + S-adenosyl-L-homocysteine + H(+). Specifically methylates the adenine in position 37 of tRNA(1)(Val) (anticodon cmo5UAC). This Photorhabdus laumondii subsp. laumondii (strain DSM 15139 / CIP 105565 / TT01) (Photorhabdus luminescens subsp. laumondii) protein is tRNA1(Val) (adenine(37)-N6)-methyltransferase.